A 175-amino-acid chain; its full sequence is MTKEECFYLGKIVAKFSFKGEVLIKLDTDEPETYTEMESVLVEYNDNLVPFFIERSYLHKSTLLRAKFEDIETEEDAEDMIGAHVYLPLSMLPKLPEDKFYFHEIIGFNVIDAEHGNIGKIVSINDSTAQALFEIEKDGKQILIPMNDEFIEKVDKKNNTVRVITPEGLVELYLG.

One can recognise a PRC barrel domain in the interval glutamate 97–leucine 169.

Belongs to the RimM family. Binds ribosomal protein uS19.

The protein localises to the cytoplasm. Its function is as follows. An accessory protein needed during the final step in the assembly of 30S ribosomal subunit, possibly for assembly of the head region. Essential for efficient processing of 16S rRNA. May be needed both before and after RbfA during the maturation of 16S rRNA. It has affinity for free ribosomal 30S subunits but not for 70S ribosomes. This Christiangramia forsetii (strain DSM 17595 / CGMCC 1.15422 / KT0803) (Gramella forsetii) protein is Ribosome maturation factor RimM.